The chain runs to 416 residues: Type II methyltransferase M.PspPI (416 aa).

Residues 77 to 410 enclose the SAM-dependent MTase C5-type domain; it reads YSLVELFAGA…KAIIRMLNAA (334 aa). Residue C149 is part of the active site.

This sequence belongs to the class I-like SAM-binding methyltransferase superfamily. C5-methyltransferase family.

The enzyme catalyses a 2'-deoxycytidine in DNA + S-adenosyl-L-methionine = a 5-methyl-2'-deoxycytidine in DNA + S-adenosyl-L-homocysteine + H(+). Functionally, a methylase, recognizes the double-stranded sequence 5'-GGNCC-3', methylates C-4 on both strands, and protects the DNA from cleavage by the PspPI endonuclease. This Psychrobacter sp. (strain TA137) protein is Type II methyltransferase M.PspPI.